The sequence spans 285 residues: CCR4-NOT transcription complex subunit 7 (285 aa).

A divalent metal cation contacts are provided by D40, E42, D161, D230, and E278.

It belongs to the CAF1 family. As to quaternary structure, component of the CCR4-NOT complex. It depends on Mn(2+) as a cofactor. The cofactor is Mg(2+). Co(2+) is required as a cofactor.

The protein resides in the nucleus. It localises to the cytoplasm. It catalyses the reaction Exonucleolytic cleavage of poly(A) to 5'-AMP.. Functionally, has 3'-5' poly(A) exoribonuclease activity for synthetic poly(A) RNA substrate. Catalytic component of the CCR4-NOT complex which is one of the major cellular mRNA deadenylases and is linked to various cellular processes including bulk mRNA degradation, miRNA-mediated repression, translational repression during translational initiation and general transcription regulation. During miRNA-mediated repression the complex also seems to act as translational repressor during translational initiation. Additional complex functions may be a consequence of its influence on mRNA expression. The polypeptide is CCR4-NOT transcription complex subunit 7 (CNOT7) (Gallus gallus (Chicken)).